The chain runs to 1074 residues: DNA-directed RNA polymerase subunit beta (1074 aa).

Belongs to the RNA polymerase beta chain family. As to quaternary structure, in plastids the minimal PEP RNA polymerase catalytic core is composed of four subunits: alpha, beta, beta', and beta''. When a (nuclear-encoded) sigma factor is associated with the core the holoenzyme is formed, which can initiate transcription.

Its subcellular location is the plastid. It is found in the chloroplast. It carries out the reaction RNA(n) + a ribonucleoside 5'-triphosphate = RNA(n+1) + diphosphate. Its function is as follows. DNA-dependent RNA polymerase catalyzes the transcription of DNA into RNA using the four ribonucleoside triphosphates as substrates. In Chara vulgaris (Common stonewort), this protein is DNA-directed RNA polymerase subunit beta.